A 473-amino-acid polypeptide reads, in one-letter code: 7-dehydrocholesterol reductase (473 aa).

Residues 1 to 20 (MGERRRANASRGDKKVANGE) are disordered. 6 helical membrane passes run 36 to 56 (FSLA…YYFV), 97 to 117 (IYLA…DILH), 175 to 195 (WIPL…FALV), 264 to 284 (VTNS…DFFW), 304 to 324 (LGWG…LYLV), and 329 to 349 (ELST…YYIF). NADP(+)-binding positions include lysine 356, arginine 360, methionine 393, tryptophan 398, and 405-406 (NY). The helical transmembrane segment at 419-439 (ACGFDHLLPYFYFIYMTILLV) threads the bilayer. Residues aspartate 445, 449 to 453 (CSSKY), and tyrosine 460 contribute to the NADP(+) site.

This sequence belongs to the ERG4/ERG24 family.

The protein localises to the endoplasmic reticulum membrane. It catalyses the reaction cholesterol + NADP(+) = 7-dehydrocholesterol + NADPH + H(+). The catalysed reaction is 7-dehydrodesmosterol + NADPH + H(+) = desmosterol + NADP(+). It functions in the pathway steroid biosynthesis; cholesterol biosynthesis. Functionally, catalyzes the last step of the cholesterol synthesis pathway, which transforms cholesta-5,7-dien-3beta-ol (7-dehydrocholesterol,7-DHC) into cholesterol by reducing the C7-C8 double bond of its sterol core. Can also metabolize cholesta-5,7,24-trien-3beta-ol (7-dehydrodemosterol, 7-DHD) to desmosterol, which is then metabolized by the Delta(24)-sterol reductase (DHCR24) to cholesterol. Modulates ferroptosis (a form of regulated cell death driven by iron-dependent lipid peroxidation) through the metabolic breakdown of the anti-ferroptotic metabolites 7-DHC and 7-DHD which, when accumulated, divert the propagation of peroxyl radical-mediated damage from phospholipid components to its sterol core, protecting plasma and mitochondrial membranes from phospholipid autoxidation. The polypeptide is 7-dehydrocholesterol reductase (dhcr7) (Xenopus laevis (African clawed frog)).